The following is a 373-amino-acid chain: NAD-dependent protein deacetylase SIR2rp1 (373 aa).

One can recognise a Deacetylase sirtuin-type domain in the interval 12–349 (HALGEPTVEG…LKLAECLGLR (338 aa)). Residues 39–59 (GAGA…TGIY) and 124–127 (QNID) contribute to the NAD(+) site. Histidine 144 functions as the Proton acceptor in the catalytic mechanism. Zn(2+) contacts are provided by cysteine 152, cysteine 155, cysteine 176, and cysteine 179. NAD(+)-binding positions include 216-218 (GTS) and 241-243 (NRE). Positions 263–313 (DAVAKEGRSSSSQSRSPSASARREEGGTEDGSSSPNEEVEDASTSSSSDGY) are disordered. Residues 271–282 (SSSSQSRSPSAS) show a composition bias toward low complexity. Cysteine 335 is a binding site for NAD(+).

The protein belongs to the sirtuin family. Class I subfamily. Zn(2+) serves as cofactor.

It is found in the nucleus. It catalyses the reaction N(6)-acetyl-L-lysyl-[protein] + NAD(+) + H2O = 2''-O-acetyl-ADP-D-ribose + nicotinamide + L-lysyl-[protein]. In terms of biological role, NAD-dependent deacetylase, which probably acts as a regulator of gene expression believed to help form modified chromatin structures on the genes it regulates. The polypeptide is NAD-dependent protein deacetylase SIR2rp1 (SIR2rp1) (Leishmania major).